Consider the following 1044-residue polypeptide: Spindle assembly checkpoint serine/threonine-protein kinase bub1 (1044 aa).

The BUB1 N-terminal domain occupies 36-204 (FQEELDIIEE…SSPFPPPRIV (169 aa)). Disordered regions lie at residues 209–259 (PVSS…PLLY), 317–343 (VHHD…TPTR), 404–446 (ESLE…SQEE), 484–555 (KNSN…DSNS), and 685–705 (IKPK…SLDG). Residues 223-239 (QVFSDASSSRDSQNASD) show a composition bias toward polar residues. Positions 430–442 (NSSNSGATSLTGR) are enriched in polar residues. The segment covering 504 to 518 (STLQEETATGTTSTT) has biased composition (low complexity). Polar residues predominate over residues 544–555 (RSPQYSTVDSNS). Threonine 550 carries the phosphothreonine modification. Residues 718 to 1044 (LSVISKLGQG…LLKSIEKRKI (327 aa)) form the Protein kinase domain. ATP-binding residues include alanine 728, phenylalanine 729, alanine 730, lysine 762, and aspartate 809. Catalysis depends on aspartate 861, which acts as the Proton acceptor. Aspartate 865, asparagine 866, and aspartate 900 together coordinate ATP.

Belongs to the protein kinase superfamily. Ser/Thr protein kinase family. BUB1 subfamily. In terms of assembly, part of the BUB1-BUB3 complex, composed of bub1 and bub3. Interacts with spc7 (when phosphorylated on MELT motifs); to recruit the bub1-bub3 complex to kinetochores. Interacts with mad3. Post-translationally, autophosphorylated.

It is found in the nucleus. The protein resides in the chromosome. The protein localises to the centromere. Its subcellular location is the kinetochore. It carries out the reaction L-seryl-[protein] + ATP = O-phospho-L-seryl-[protein] + ADP + H(+). It catalyses the reaction L-threonyl-[protein] + ATP = O-phospho-L-threonyl-[protein] + ADP + H(+). Its function is as follows. Involved in mitotic spindle assembly checkpoint signaling, a process that delays anaphase until chromosomes are bioriented on the spindle, and in the repair of incorrect mitotic kinetochore-spindle microtubule attachments. Acts as a kinetochore scaffold for the recruitment of other spindle assembly checkpoint components. The polypeptide is Spindle assembly checkpoint serine/threonine-protein kinase bub1 (Schizosaccharomyces pombe (strain 972 / ATCC 24843) (Fission yeast)).